Reading from the N-terminus, the 55-residue chain is MDSAKIINIILSLFLPPVAVFLARGWGTDCIVDIILTILAWFPGMLYALYIVLQD.

The next 2 membrane-spanning stretches (helical) occupy residues S3–A23 and I31–I51.

Belongs to the UPF0057 (PMP3) family.

Its subcellular location is the cell membrane. Functionally, plays a role in the regulation of membrane potential. Could mediate a proton leak. This chain is Plasma membrane proteolipid 3 (PMP3), found in Saccharomyces cerevisiae (strain ATCC 204508 / S288c) (Baker's yeast).